Consider the following 811-residue polypeptide: Potassium transporter 7 (811 aa).

Topologically, residues Met1–Ser52 are cytoplasmic. A helical transmembrane segment spans residues Leu53–Val73. At Tyr74 to Gly93 the chain is on the extracellular side. A helical membrane pass occupies residues Leu94–Val114. Residues Leu115–Leu181 are Cytoplasmic-facing. A helical membrane pass occupies residues Leu182–Ile202. The Extracellular segment spans residues Ser203–Gly217. A helical membrane pass occupies residues Gly218 to Leu238. At Gln239 to Arg245 the chain is on the cytoplasmic side. The chain crosses the membrane as a helical span at residues Val246–Leu266. The Extracellular portion of the chain corresponds to Tyr267–Gly296. A helical membrane pass occupies residues Trp297 to Leu317. At Gly318 to Arg326 the chain is on the cytoplasmic side. Residues Leu327–Phe347 form a helical membrane-spanning segment. The Extracellular segment spans residues Leu348–Ser366. N-linked (GlcNAc...) asparagine glycosylation is present at Asn351. A helical transmembrane segment spans residues Leu367 to Ile387. The Cytoplasmic segment spans residues Ser388–Gln418. The helical transmembrane segment at Ile419–Phe439 threads the bilayer. At Arg440–Gly450 the chain is on the extracellular side. A helical transmembrane segment spans residues Leu451–Val471. Residues Trp472 to Asn475 lie on the Cytoplasmic side of the membrane. A helical membrane pass occupies residues Ile476–Ala496. Residues Ala497–Gln503 lie on the Extracellular side of the membrane. Residues Gly504–Tyr524 traverse the membrane as a helical segment. Residues Gly525 to Val811 lie on the Cytoplasmic side of the membrane. The tract at residues Thr680 to Ser702 is disordered.

It belongs to the HAK/KUP transporter (TC 2.A.72.3) family. Expressed in roots and shoots.

The protein resides in the membrane. In terms of biological role, high-affinity potassium transporter. This is Potassium transporter 7 (HAK7) from Oryza sativa subsp. japonica (Rice).